Reading from the N-terminus, the 735-residue chain is Ion-translocating oxidoreductase complex subunit C (735 aa).

4Fe-4S ferredoxin-type domains follow at residues 368–397 (MGAP…QQLY) and 407–436 (KATA…VQYF). [4Fe-4S] cluster-binding residues include Cys-377, Cys-380, Cys-383, Cys-387, Cys-416, Cys-419, Cys-422, and Cys-426. The disordered stretch occupies residues 534 to 715 (QARAKQAAHP…AVDPRKAAVA (182 aa)). The segment covering 666–689 (QQAGSEPAEPAAPRKAAVEAAIAR) has biased composition (low complexity).

The protein belongs to the 4Fe4S bacterial-type ferredoxin family. RnfC subfamily. In terms of assembly, the complex is composed of six subunits: RsxA, RsxB, RsxC, RsxD, RsxE and RsxG. The cofactor is [4Fe-4S] cluster.

The protein localises to the cell inner membrane. Its function is as follows. Part of a membrane-bound complex that couples electron transfer with translocation of ions across the membrane. Required to maintain the reduced state of SoxR. This is Ion-translocating oxidoreductase complex subunit C from Salmonella paratyphi B (strain ATCC BAA-1250 / SPB7).